Here is a 130-residue protein sequence, read N- to C-terminus: Small ribosomal subunit protein uS8 (130 aa).

The protein belongs to the universal ribosomal protein uS8 family. Part of the 30S ribosomal subunit. Contacts proteins S5 and S12.

Its function is as follows. One of the primary rRNA binding proteins, it binds directly to 16S rRNA central domain where it helps coordinate assembly of the platform of the 30S subunit. In Aster yellows witches'-broom phytoplasma (strain AYWB), this protein is Small ribosomal subunit protein uS8.